A 94-amino-acid polypeptide reads, in one-letter code: Large ribosomal subunit protein bL25 (94 aa).

Residues 1–20 (MFKFNAEVRQSQGKGASRRL) are disordered.

The protein belongs to the bacterial ribosomal protein bL25 family. As to quaternary structure, part of the 50S ribosomal subunit; part of the 5S rRNA/L5/L18/L25 subcomplex. Contacts the 5S rRNA. Binds to the 5S rRNA independently of L5 and L18.

This is one of the proteins that binds to the 5S RNA in the ribosome where it forms part of the central protuberance. The chain is Large ribosomal subunit protein bL25 from Pasteurella multocida (strain Pm70).